Consider the following 417-residue polypeptide: Tyrosine--tRNA ligase (417 aa).

Tyrosine 35 is a binding site for L-tyrosine. The 'HIGH' region motif lies at 40–49 (ATAGSLTVGH). Positions 165 and 169 each coordinate L-tyrosine. Positions 229–233 (KFGKS) match the 'KMSKS' region motif. An ATP-binding site is contributed by lysine 232. An S4 RNA-binding domain is found at 350–416 (ISLLEALVFT…GKRFNALIIF (67 aa)).

This sequence belongs to the class-I aminoacyl-tRNA synthetase family. TyrS type 1 subfamily. As to quaternary structure, homodimer.

It is found in the cytoplasm. It catalyses the reaction tRNA(Tyr) + L-tyrosine + ATP = L-tyrosyl-tRNA(Tyr) + AMP + diphosphate + H(+). In terms of biological role, catalyzes the attachment of tyrosine to tRNA(Tyr) in a two-step reaction: tyrosine is first activated by ATP to form Tyr-AMP and then transferred to the acceptor end of tRNA(Tyr). The protein is Tyrosine--tRNA ligase of Phytoplasma mali (strain AT).